We begin with the raw amino-acid sequence, 168 residues long: Phosphopantetheine adenylyltransferase (168 aa).

Threonine 13 is a binding site for substrate. ATP-binding positions include 13–14 and histidine 21; that span reads TF. The substrate site is built by lysine 45, leucine 78, and arginine 92. Residues 93–95, glutamate 103, and 128–134 contribute to the ATP site; these read GLR and TQFISSG.

The protein belongs to the bacterial CoaD family. Homohexamer. Mg(2+) serves as cofactor.

The protein localises to the cytoplasm. The catalysed reaction is (R)-4'-phosphopantetheine + ATP + H(+) = 3'-dephospho-CoA + diphosphate. It participates in cofactor biosynthesis; coenzyme A biosynthesis; CoA from (R)-pantothenate: step 4/5. Functionally, reversibly transfers an adenylyl group from ATP to 4'-phosphopantetheine, yielding dephospho-CoA (dPCoA) and pyrophosphate. The sequence is that of Phosphopantetheine adenylyltransferase from Wolbachia sp. subsp. Drosophila simulans (strain wRi).